An 82-amino-acid polypeptide reads, in one-letter code: Putative defensin-like protein 134 (82 aa).

The N-terminal stretch at 1 to 26 (MEVRSLNLCFLLVLVLLMSPAPTAVA) is a signal peptide. Disulfide bonds link cysteine 32/cysteine 79, cysteine 42/cysteine 68, cysteine 47/cysteine 74, and cysteine 51/cysteine 76.

Belongs to the DEFL family.

It is found in the secreted. This is Putative defensin-like protein 134 from Arabidopsis thaliana (Mouse-ear cress).